The following is a 2485-amino-acid chain: Probable polyketide synthase 10 (2485 aa).

Residues 8-447 (EDDIAIIGVG…GANCCIILSE (440 aa)) form the Ketosynthase family 3 (KS3) domain. Catalysis depends on for beta-ketoacyl synthase activity residues Cys-184, His-325, and His-363. An acyl/malonyl transferase region spans residues 636–669 (GIEASFIVGHSLGEISAAHCSGMIDLETLCYIIY). Ser-646 serves as the catalytic For acyl/malonyl transferase activity. The segment at 930 to 1054 (PPITILGNES…GNFHISNNLF (125 aa)) is N-terminal hotdog fold. The PKS/mFAS DH domain occupies 930–1220 (PPITILGNES…SKSLTPIQDP (291 aa)). His-964 acts as the Proton acceptor; for dehydratase activity in catalysis. The C-terminal hotdog fold stretch occupies residues 1071–1220 (NYSLIERDDL…SKSLTPIQDP (150 aa)). Asp-1134 functions as the Proton donor; for dehydratase activity in the catalytic mechanism. A Carrier domain is found at 2410–2485 (ESNKGIDGLL…NQLIKFLNKK (76 aa)). The residue at position 2447 (Ser-2447) is an O-(pantetheine 4'-phosphoryl)serine.

Pantetheine 4'-phosphate serves as cofactor.

In terms of biological role, probable polyketide synthase. The protein is Probable polyketide synthase 10 (pks10) of Dictyostelium discoideum (Social amoeba).